We begin with the raw amino-acid sequence, 366 residues long: N-acetyl-6-hydroxytryptophan oxidase ivoB (366 aa).

The N-terminal stretch at 1 to 18 is a signal peptide; it reads MHLLSSLAALAAAITVAF. Residues Asn28 and Asn81 are each glycosylated (N-linked (GlcNAc...) asparagine). Residues His87 and His96 each contribute to the Cu cation site. N-linked (GlcNAc...) asparagine glycosylation is found at Asn114 and Asn121. A Cu cation-binding site is contributed by His291. The N-linked (GlcNAc...) asparagine glycan is linked to Asn319.

The protein belongs to the tyrosinase family. The cofactor is Cu(2+).

The protein operates within pigment biosynthesis. Its activity is regulated as follows. Activity is inhibited by 2,3-dihydroxynaphthalene, phenylhydrazine, diethyl dithiocarbamate and 8-hydroxyquinolene. Nonribosomal peptide synthetase; part of the pathway that mediates the biosynthesis of the gray-brown conidiophore pigment. The first step of the pathway is performed by the nonribosomal peptide synthetase ivoA that catalyzes ATP-dependent unidirectional stereoinversion of L-tryptophan to D-tryptophan with complete conversion. While the stereoinversion is catalyzed by the epimerization (E) domain of ivoA, the terminal condensation (C) domain stereoselectively hydrolyzes D-tryptophanyl-S-phosphopantetheine thioester and thus represents a non-canonical C domain function. D-tryptophan is acetylated, probably by an endogenous acetyltransferase. N-acetyltryptophan is further 6-hydroxylated into N-acetyl-6-hydroxytryptophan (AHT) by the cytochrome P450 monooxygenase ivoC. N-acetyl-6-hydroxytryptophan is substrate of the N-acetyl-6-hydroxytryptophan oxidase ivoB to produce the gray-brown conidiophore pigment. The polypeptide is N-acetyl-6-hydroxytryptophan oxidase ivoB (Emericella nidulans (strain FGSC A4 / ATCC 38163 / CBS 112.46 / NRRL 194 / M139) (Aspergillus nidulans)).